Consider the following 248-residue polypeptide: Probable transcriptional regulatory protein Pcar_2335 (248 aa).

It belongs to the TACO1 family.

The protein resides in the cytoplasm. The chain is Probable transcriptional regulatory protein Pcar_2335 from Syntrophotalea carbinolica (strain DSM 2380 / NBRC 103641 / GraBd1) (Pelobacter carbinolicus).